Reading from the N-terminus, the 119-residue chain is Fluoride-specific ion channel FluC 2 (119 aa).

4 helical membrane-spanning segments follow: residues 1–21 (MITV…RYGI), 33–53 (FPYA…FIFS), 56–76 (FSPF…TTFS), and 93–113 (VFTL…FLGY). Na(+) contacts are provided by glycine 70 and threonine 73.

Belongs to the fluoride channel Fluc/FEX (TC 1.A.43) family.

Its subcellular location is the cell membrane. The catalysed reaction is fluoride(in) = fluoride(out). Its activity is regulated as follows. Na(+) is not transported, but it plays an essential structural role and its presence is essential for fluoride channel function. Its function is as follows. Fluoride-specific ion channel. Important for reducing fluoride concentration in the cell, thus reducing its toxicity. The sequence is that of Fluoride-specific ion channel FluC 2 from Lactobacillus johnsonii (strain CNCM I-12250 / La1 / NCC 533).